The following is a 316-amino-acid chain: GTP cyclohydrolase FolE2 1 (316 aa).

Belongs to the GTP cyclohydrolase IV family.

It carries out the reaction GTP + H2O = 7,8-dihydroneopterin 3'-triphosphate + formate + H(+). The protein operates within cofactor biosynthesis; 7,8-dihydroneopterin triphosphate biosynthesis; 7,8-dihydroneopterin triphosphate from GTP: step 1/1. Functionally, converts GTP to 7,8-dihydroneopterin triphosphate. The chain is GTP cyclohydrolase FolE2 1 from Burkholderia lata (strain ATCC 17760 / DSM 23089 / LMG 22485 / NCIMB 9086 / R18194 / 383).